Consider the following 261-residue polypeptide: Phosphatidylglycerol--prolipoprotein diacylglyceryl transferase (261 aa).

The next 3 helical transmembrane spans lie at 20-40 (LAIHWYAIFIVGGAALAVWLA), 54-74 (IIDFVLFAFPLGIVGARLYYV), and 88-108 (IIAIWDGGGAIYGSLIAGAIV). Residue Arg-139 coordinates a 1,2-diacyl-sn-glycero-3-phospho-(1'-sn-glycerol). 2 consecutive transmembrane segments (helical) span residues 175 to 195 (MPTFLFESIGTLSGFILVMVF) and 235 to 255 (ARVSQWLSVLLVILGIILFVY).

The protein belongs to the Lgt family.

It is found in the cell membrane. The enzyme catalyses L-cysteinyl-[prolipoprotein] + a 1,2-diacyl-sn-glycero-3-phospho-(1'-sn-glycerol) = an S-1,2-diacyl-sn-glyceryl-L-cysteinyl-[prolipoprotein] + sn-glycerol 1-phosphate + H(+). Its pathway is protein modification; lipoprotein biosynthesis (diacylglyceryl transfer). Functionally, catalyzes the transfer of the diacylglyceryl group from phosphatidylglycerol to the sulfhydryl group of the N-terminal cysteine of a prolipoprotein, the first step in the formation of mature lipoproteins. The chain is Phosphatidylglycerol--prolipoprotein diacylglyceryl transferase from Lactococcus lactis subsp. cremoris (strain MG1363).